A 342-amino-acid polypeptide reads, in one-letter code: Maltose regulon regulatory protein MalI (342 aa).

An HTH lacI-type domain is found at 7 to 61 (ITIHDVALAAGVSVSTVSLVLSGKGRISTATGERVNAAIEELGFVRNRQASALRG). A DNA-binding region (H-T-H motif) is located at residues 9 to 28 (IHDVALAAGVSVSTVSLVLS).

Functionally, repressor for the malX and malY genes. Also regulates its own expression. Binds maltose as an inducer. The sequence is that of Maltose regulon regulatory protein MalI (malI) from Escherichia coli (strain K12).